A 113-amino-acid polypeptide reads, in one-letter code: Nucleoid-associated protein ROP_41370 (113 aa).

Belongs to the YbaB/EbfC family. Homodimer.

It is found in the cytoplasm. The protein localises to the nucleoid. In terms of biological role, binds to DNA and alters its conformation. May be involved in regulation of gene expression, nucleoid organization and DNA protection. The sequence is that of Nucleoid-associated protein ROP_41370 from Rhodococcus opacus (strain B4).